The following is a 100-amino-acid chain: ATP synthase subunit c (100 aa).

The next 2 membrane-spanning stretches (helical) occupy residues 26–46 (FSVVAAGIGLGVAALGGAIGM) and 71–91 (MFIALAMIEAQVIYALVIALI).

This sequence belongs to the ATPase C chain family. As to quaternary structure, F-type ATPases have 2 components, F(1) - the catalytic core - and F(0) - the membrane proton channel. F(1) has five subunits: alpha(3), beta(3), gamma(1), delta(1), epsilon(1). F(0) has three main subunits: a(1), b(2) and c(10-14). The alpha and beta chains form an alternating ring which encloses part of the gamma chain. F(1) is attached to F(0) by a central stalk formed by the gamma and epsilon chains, while a peripheral stalk is formed by the delta and b chains.

Its subcellular location is the cell inner membrane. In terms of biological role, f(1)F(0) ATP synthase produces ATP from ADP in the presence of a proton or sodium gradient. F-type ATPases consist of two structural domains, F(1) containing the extramembraneous catalytic core and F(0) containing the membrane proton channel, linked together by a central stalk and a peripheral stalk. During catalysis, ATP synthesis in the catalytic domain of F(1) is coupled via a rotary mechanism of the central stalk subunits to proton translocation. Functionally, key component of the F(0) channel; it plays a direct role in translocation across the membrane. A homomeric c-ring of between 10-14 subunits forms the central stalk rotor element with the F(1) delta and epsilon subunits. In Campylobacter fetus subsp. fetus (strain 82-40), this protein is ATP synthase subunit c.